We begin with the raw amino-acid sequence, 246 residues long: Pyrroloquinoline-quinone synthase (246 aa).

This sequence belongs to the PqqC family.

It catalyses the reaction 6-(2-amino-2-carboxyethyl)-7,8-dioxo-1,2,3,4,7,8-hexahydroquinoline-2,4-dicarboxylate + 3 O2 = pyrroloquinoline quinone + 2 H2O2 + 2 H2O + H(+). It functions in the pathway cofactor biosynthesis; pyrroloquinoline quinone biosynthesis. Functionally, ring cyclization and eight-electron oxidation of 3a-(2-amino-2-carboxyethyl)-4,5-dioxo-4,5,6,7,8,9-hexahydroquinoline-7,9-dicarboxylic-acid to PQQ. This chain is Pyrroloquinoline-quinone synthase, found in Acidiphilium cryptum (strain JF-5).